The following is a 68-amino-acid chain: Conotoxin VnMMSK-01 (68 aa).

An N-terminal signal peptide occupies residues 1 to 20; that stretch reads MMSKLGVLLTICLLLFPLTA. Positions 21-50 are excised as a propeptide; it reads VPMDGDQPADLPALRTQDFEPERSPWFDPV. 3 disulfides stabilise this stretch: C53-C65, C54-C61, and C58-C64. P63 is subject to 4-hydroxyproline.

This sequence belongs to the conotoxin M superfamily. Expressed by the venom duct.

The protein resides in the secreted. This Conus ventricosus (Mediterranean cone) protein is Conotoxin VnMMSK-01.